Consider the following 136-residue polypeptide: MFIIIFIVLISLIGCETLQHDGKVFPMKGPLTRVVIYNDNDYLLGVHCKSRDDDHGFHILQKGGLYGWMFYVNFMNSTLYFCGFSQEQVKKGVFDIYKAVRDSSRCRNCTWEAKEDGIYGYGEIPKKNPLFYKWLM.

The N-terminal stretch at 1-17 (MFIIIFIVLISLIGCET) is a signal peptide. N-linked (GlcNAc...) asparagine glycans are attached at residues Asn76 and Asn108.

The protein belongs to the plant self-incompatibility (S1) protein family.

The protein localises to the secreted. The chain is S-protein homolog 6 from Arabidopsis thaliana (Mouse-ear cress).